A 614-amino-acid chain; its full sequence is Zinc metalloproteinase-disintegrin-like protein H4 subunit A (614 aa).

Residues 1–20 (MIQPLLVVTCLVVFPYQVSS) form the signal peptide. A propeptide spanning residues 21-193 (IILESGNVND…RKASQLVATS (173 aa)) is cleaved from the precursor. At E194 the chain carries Pyrrolidone carboxylic acid (Glu). One can recognise a Peptidase M12B domain in the interval 201–397 (KYIELVIVVD…IKSKCIDNKP (197 aa)). A glycan (N-linked (GlcNAc...) asparagine) is linked at N220. 17 cysteine pairs are disulfide-bonded: C312–C392, C352–C376, C354–C359, C408–C437, C419–C432, C421–C427, C431–C454, C445–C451, C450–C476, C463–C483, C470–C502, C495–C507, C514–C564, C529–C575, C542–C552, C559–C601, and C595–C607. Residue H337 coordinates Zn(2+). Residues 337–348 (HELGHNLGMDHD) carry the Metal-binding motif. Catalysis depends on E338, which acts as the Proton acceptor. Zn(2+) contacts are provided by H341 and H347. Residues 405–491 (PAFCGNYFVE…ECPTDVLQRN (87 aa)) enclose the Disintegrin domain. Residues N410, F412, E414, E417, and D420 each coordinate Ca(2+). N433 is a glycosylation site (N-linked (GlcNAc...) asparagine). A D/ECD-tripeptide motif is present at residues 469 to 471 (ECD). Ca(2+) contacts are provided by D471 and D486.

This sequence belongs to the venom metalloproteinase (M12B) family. P-III subfamily. In terms of assembly, homodimer; disulfide-linked. Heterodimer of A and B subunits; disulfide-linked. Zn(2+) is required as a cofactor. Post-translationally, N-glycosylated. The N-terminus is blocked. In terms of tissue distribution, expressed by the venom gland (at protein level). Expressed by the venom gland.

It localises to the secreted. The proteolytic activity of the heterodimer of A and B subunits requires Zn(2+) and Ca(2+) ions. In terms of biological role, heterodimer (A and B subunits): Zinc metalloprotease that has fibrinogenolytic and hemorrhagic activities. Cleaves insulin B chain preferably at '40-Tyr-|-Leu-41' bond, but also at '28-Gln-|-His-29' and '34-His-|-Leu-35' bonds. Hydrolyzes effectively isolated extracellular matrix (ECM) bovine fibronectin, and only slightly, basal membrane (BM) proteins human collagen IV and murine laminin, in vitro. Cleaves nidogen-1 (at '350-Ser-|-Phe-351' and '380-Tyr-|-Asn-381' bonds), but not laminin, in a solubilized BM preparation. Hydrolyzes plasma proteins involved in blood coagulation in vitro. It slightly shortens prothrombin time and significantly prolongs thrombin time. Has potent alpha-fibrinogenase activity cleaving human fibrinogen alpha chain at '441-Glu-|-Leu-442' and '539-Glu-|-Phe-540' bonds, and to a lesser extent, beta chain at '52-Lys-|-Arg-53' and '48-Pro-|-Leu-49' bonds, but does not cleave gamma chain. Hydrolyzes bovine prothrombin at '200-Ser-|-Gly-201' bond, but does not activate it, however, it cleaves fragment 1 and prethrombin 1 from it. Hydrolyzes bovine factor X heavy chain, but the cleavage does not produce an activated factor Xa heavy chain. No hydrolysis or activation of plasminogen. The ability to degrade some of the ECM, BM and plasma proteins is likely the main contributor to its hemorrhagic activity. Inhibits platelet aggregation induced by collagen in vitro. Its binding to glycosaminoglycans (GAGs) may assist in concentrating it in the proximity of blood vessel walls enabling in vivo degradation of BM protein components. Cytotoxic to cultured HeLa cancer cells in a concentration- and time-dependent manner. In the solubilized BM preparation (Matrigel), it induces morphological changes in the HeLa cells and inhibits their adhesion, however, the viability of the cells is not reduced. This is Zinc metalloproteinase-disintegrin-like protein H4 subunit A from Vipera ammodytes ammodytes (Western sand viper).